Consider the following 321-residue polypeptide: Lipoyl synthase (321 aa).

[4Fe-4S] cluster contacts are provided by cysteine 68, cysteine 73, cysteine 79, cysteine 94, cysteine 98, cysteine 101, and serine 308. The Radical SAM core domain occupies 80 to 297 (FNHGTATFMI…KEVALELGFT (218 aa)).

Belongs to the radical SAM superfamily. Lipoyl synthase family. It depends on [4Fe-4S] cluster as a cofactor.

It is found in the cytoplasm. The enzyme catalyses [[Fe-S] cluster scaffold protein carrying a second [4Fe-4S](2+) cluster] + N(6)-octanoyl-L-lysyl-[protein] + 2 oxidized [2Fe-2S]-[ferredoxin] + 2 S-adenosyl-L-methionine + 4 H(+) = [[Fe-S] cluster scaffold protein] + N(6)-[(R)-dihydrolipoyl]-L-lysyl-[protein] + 4 Fe(3+) + 2 hydrogen sulfide + 2 5'-deoxyadenosine + 2 L-methionine + 2 reduced [2Fe-2S]-[ferredoxin]. The protein operates within protein modification; protein lipoylation via endogenous pathway; protein N(6)-(lipoyl)lysine from octanoyl-[acyl-carrier-protein]: step 2/2. Its function is as follows. Catalyzes the radical-mediated insertion of two sulfur atoms into the C-6 and C-8 positions of the octanoyl moiety bound to the lipoyl domains of lipoate-dependent enzymes, thereby converting the octanoylated domains into lipoylated derivatives. The sequence is that of Lipoyl synthase from Vibrio parahaemolyticus serotype O3:K6 (strain RIMD 2210633).